Consider the following 156-residue polypeptide: MGMRRGRRLAVDVGDARIGVASCDPDGILATPVETVPGRDVPAAHRRLKQLVEEYEPIEVVLGLPRSLKGGEGPAAVKVRAFAQELARVIAPVPVRLMDERMTTVTASQGLRASGVKSKKGRSVIDQAAAVIILQQALESERVSGKAPGEGVEVVI.

It belongs to the YqgF nuclease family.

It localises to the cytoplasm. Its function is as follows. Could be a nuclease involved in processing of the 5'-end of pre-16S rRNA. This is Putative pre-16S rRNA nuclease from Streptomyces avermitilis (strain ATCC 31267 / DSM 46492 / JCM 5070 / NBRC 14893 / NCIMB 12804 / NRRL 8165 / MA-4680).